A 142-amino-acid polypeptide reads, in one-letter code: Type IV pilus subunit protein TapA (142 aa).

Residues 1-6 (MKKQSG) constitute a propeptide, leader sequence. Phe7 is subject to N-methylphenylalanine. A helical transmembrane segment spans residues 7-27 (FTLIELMIVVAIVAILAAIAL).

It belongs to the N-Me-Phe pilin family.

It localises to the membrane. In terms of biological role, major component of the type IV (TAP) pilus. Aeromonas hydrophila possesses two distinct families of type IV pili: the bundle-forming pilus (Bfp) and the type IV pilus (Tap). The polypeptide is Type IV pilus subunit protein TapA (tapA) (Aeromonas hydrophila).